Consider the following 1466-residue polypeptide: MFFLTKILPLRGRIFPMFGCLLLIVSLITGCIASPAAEVAETVFDSKPVDFMTFKDSTNTLFLNAEFGDVYLSQDNGQSWRNGVISGQVCPIKKLIKHSFENSRVFALTECDTVYYSYDNGENWDYFTIDHPISITQLPFHFHAKNPDYVIFNNQYCSSSGTWVGKICKPDLYYTKDGFQSDPEPMPVGSSYCIFADSSEKMVVSSEEQIICISLNPNSAARPPFSHHIVYSDDWFQSIVPVQLHNFLGSDGAYGILSTGSFLVAALIDAATRKLFVYVSQDGYYWEEALKFHKGFEFDAFTILPSTEYSFFIDSLDSHPNNPTGILYSLDSESNTFVIRQMNTNRYVDGYTDFMLIDYLDGLQFVNVVENVDEIEVDPQVDKVLSSRITFDGGKTWSTVASPESSCNSMKQCSLHLFLDPHVSHASIASSKFAPGILLASGSVGDRLLSENQMDLFVSEDGGRNWTLSRDGMHLFAMSGFGSIFFASEYLDVINEVYYSLDHGQSWVTVTLDKTIVPIKLFASEDPYAEIFYLLAMTDDGEQSNYSLFSFNFGKFLPKECQFSNSESNKNDFEKWYTRYANGSPICSEMGKKEFFWRKKATSVCSVPKSITDLHGSFDACECTDEDYECNTQFISNDQGECKLLDFIGSLLCASEDLDTFQKIPYRLVPGNKCTPNKRDSHREPQTFNCDSFNEPGTEITSFLYDFDEKIVDVVYLEGTVPEENTFLIGISVNSHVYFSEDEGKTWDKFSKEEFSSVLPHAYNKNSVYMVTSKNIVYFTTNRGKNFYKFKAPSPPNQNGKSLFSFHPSRPAWLLYAGSENCEKNPFADDCRDVVFVSLDFGDTWSRLPSNLEYCSWAKAEKLVVDDTLIFCIRQNTNDPFKKELISSIDFFEYEQDEILNDVVGFMIEDEYVIVAVQDEEGTSLSLDVSINGLNFASCSFPAYLNVHPKQAYTILDSQTHSLFIHVTTNTHLGSEWGDILKSNSNGTYFMTSLANVNRDSVGYVDFERLEGIQGIALANIVSNTKELTDGGTKKLQTLITFNDGLDWSYLNLVGGEKIVPKCGKNCYLHLHGYTERNQFSDPTSTNAAVGLIIGVGSFSPFLIPYEESQTFISRDAGVTWYRIFDSPHLWAFLDSGSIIIAVESISPTNVIKYSADEGRTWQEYQFSEKSKVVVDVSTKPSGVGHQVLLLTTDDENAPISSVLIDFDALYRRTCVFDEENSEESDFVRWVPTDISGKPLCLRGRISSFYRKSIHKKCRVGSSLLVKEEVLSKCECTRADFECDYNYRRLKDGTCVLVSGLQPPDTREEQCSVDDAFEWRQPTGYKRTPLTECEGGVPLDAGTLHPCPGKEDDYYKAHPKPGGWSIFLTIIFSILLAAVAGCILYYYSRRFLKGAIRLGSDSATENPLESGISYTRGAFSSIPIFFSALYQSVRSLFIRSTPTNGEFENAAFLQNYEIDDDDEESV.

Positions 1 to 33 are cleaved as a signal peptide; that stretch reads MFFLTKILPLRGRIFPMFGCLLLIVSLITGCIA. Residues 34 to 1363 lie on the Lumenal side of the membrane; the sequence is SPAAEVAETV…YYKAHPKPGG (1330 aa). BNR repeat units follow at residues 71 to 82, 115 to 126, 388 to 399, 457 to 468, and 498 to 509; these read YLSQDNGQSWRN, YYSYDNGENWDY, RITFDGGKTWST, FVSEDGGRNWTL, and YYSLDHGQSWVT. Asparagine 465 is a glycosylation site (N-linked (GlcNAc...) asparagine). Asparagine 545 carries an N-linked (GlcNAc...) asparagine glycan. 3 BNR repeats span residues 738 to 749, 778 to 789, and 836 to 847; these read YFSEDEGKTWDK, YFTTNRGKNFYK, and FVSLDFGDTWSR. N-linked (GlcNAc...) asparagine glycosylation is present at asparagine 986. 3 BNR repeats span residues 1039–1050, 1112–1123, and 1153–1164; these read LITFNDGLDWSY, FISRDAGVTWYR, and KYSADEGRTWQE. Residues 1364–1384 traverse the membrane as a helical segment; the sequence is WSIFLTIIFSILLAAVAGCIL. Over 1385–1466 the chain is Cytoplasmic; it reads YYYSRRFLKG…EIDDDDEESV (82 aa).

This sequence belongs to the VPS10-related sortilin family.

The protein localises to the golgi apparatus. It localises to the trans-Golgi network membrane. Its subcellular location is the prevacuolar compartment membrane. Its function is as follows. Functions as a sorting receptor in the Golgi compartment required for the intracellular sorting and delivery of soluble vacuolar proteins, like carboxypeptidase Y (CPY) and proteinase A. Executes multiple rounds of sorting by cycling between the late Golgi and a prevacuolar endosome-like compartment. The sequence is that of Vacuolar protein sorting/targeting protein 10 (vps10) from Schizosaccharomyces pombe (strain 972 / ATCC 24843) (Fission yeast).